Consider the following 441-residue polypeptide: Ribosomal protein uS12 methylthiotransferase RimO (441 aa).

An MTTase N-terminal domain is found at 8–118 (PKIGFVSLGC…VLEHVHHYVP (111 aa)). Positions 17, 53, 82, 150, 154, and 157 each coordinate [4Fe-4S] cluster. The Radical SAM core domain maps to 136–373 (LTPRHYAYLK…MQLQQQISAE (238 aa)). The TRAM domain maps to 376–441 (QEKVGREILV…DEYDLWGSRV (66 aa)).

Belongs to the methylthiotransferase family. RimO subfamily. The cofactor is [4Fe-4S] cluster.

The protein localises to the cytoplasm. The enzyme catalyses L-aspartate(89)-[ribosomal protein uS12]-hydrogen + (sulfur carrier)-SH + AH2 + 2 S-adenosyl-L-methionine = 3-methylsulfanyl-L-aspartate(89)-[ribosomal protein uS12]-hydrogen + (sulfur carrier)-H + 5'-deoxyadenosine + L-methionine + A + S-adenosyl-L-homocysteine + 2 H(+). Functionally, catalyzes the methylthiolation of an aspartic acid residue of ribosomal protein uS12. The polypeptide is Ribosomal protein uS12 methylthiotransferase RimO (Escherichia coli (strain SMS-3-5 / SECEC)).